The sequence spans 95 residues: Aspartyl/glutamyl-tRNA(Asn/Gln) amidotransferase subunit C (95 aa).

It belongs to the GatC family. As to quaternary structure, heterotrimer of A, B and C subunits.

It catalyses the reaction L-glutamyl-tRNA(Gln) + L-glutamine + ATP + H2O = L-glutaminyl-tRNA(Gln) + L-glutamate + ADP + phosphate + H(+). It carries out the reaction L-aspartyl-tRNA(Asn) + L-glutamine + ATP + H2O = L-asparaginyl-tRNA(Asn) + L-glutamate + ADP + phosphate + 2 H(+). Functionally, allows the formation of correctly charged Asn-tRNA(Asn) or Gln-tRNA(Gln) through the transamidation of misacylated Asp-tRNA(Asn) or Glu-tRNA(Gln) in organisms which lack either or both of asparaginyl-tRNA or glutaminyl-tRNA synthetases. The reaction takes place in the presence of glutamine and ATP through an activated phospho-Asp-tRNA(Asn) or phospho-Glu-tRNA(Gln). In Rhodopseudomonas palustris (strain TIE-1), this protein is Aspartyl/glutamyl-tRNA(Asn/Gln) amidotransferase subunit C.